A 201-amino-acid chain; its full sequence is uncharacterized protein (201 aa).

Positions 121 to 141 (HHRTRPGRGPGPRPGGSAMAG) are disordered.

This is an uncharacterized protein from Mycobacterium tuberculosis (strain ATCC 25618 / H37Rv).